The primary structure comprises 567 residues: Thiol:disulfide interchange protein DsbD (567 aa).

The N-terminal stretch at 1–19 (MAQRIFTLILLLCSTSAFA) is a signal peptide. Intrachain disulfides connect Cys-122–Cys-128 and Cys-185–Cys-307. 8 helical membrane passes run 166 to 186 (LPFS…TPCV), 210 to 230 (LLLA…LGLV), 246 to 266 (YVLI…FGLF), 299 to 319 (IAGL…LLYI), 326 to 346 (WLGG…LMLV), 360 to 380 (WMAH…VFLL), 387 to 407 (AWGL…AFIT), and 418 to 438 (IVQI…QDWA). Residues 435 to 567 (QDWAFGSPSA…FSAHLHDRQP (133 aa)) form the Thioredoxin domain. An intrachain disulfide couples Cys-482 to Cys-485.

It belongs to the thioredoxin family. DsbD subfamily.

Its subcellular location is the cell inner membrane. The enzyme catalyses [protein]-dithiol + NAD(+) = [protein]-disulfide + NADH + H(+). It catalyses the reaction [protein]-dithiol + NADP(+) = [protein]-disulfide + NADPH + H(+). Required to facilitate the formation of correct disulfide bonds in some periplasmic proteins and for the assembly of the periplasmic c-type cytochromes. Acts by transferring electrons from cytoplasmic thioredoxin to the periplasm. This transfer involves a cascade of disulfide bond formation and reduction steps. This is Thiol:disulfide interchange protein DsbD from Salmonella choleraesuis (strain SC-B67).